The primary structure comprises 266 residues: Dihydropteroate synthase (266 aa).

In terms of domain architecture, Pterin-binding spans 12–260; that stretch reads AAIMGILNVT…DVKANQDIVA (249 aa). Asparagine 19 serves as a coordination point for Mg(2+). Residues threonine 59, aspartate 93, asparagine 112, aspartate 176, lysine 212, and 248 to 250 each bind (7,8-dihydropterin-6-yl)methyl diphosphate; that span reads RVH.

The protein belongs to the DHPS family. Homodimer or homotrimer. It depends on Mg(2+) as a cofactor.

The enzyme catalyses (7,8-dihydropterin-6-yl)methyl diphosphate + 4-aminobenzoate = 7,8-dihydropteroate + diphosphate. It functions in the pathway cofactor biosynthesis; tetrahydrofolate biosynthesis; 7,8-dihydrofolate from 2-amino-4-hydroxy-6-hydroxymethyl-7,8-dihydropteridine diphosphate and 4-aminobenzoate: step 1/2. Catalyzes the condensation of para-aminobenzoate (pABA) with 6-hydroxymethyl-7,8-dihydropterin diphosphate (DHPt-PP) to form 7,8-dihydropteroate (H2Pte), the immediate precursor of folate derivatives. The chain is Dihydropteroate synthase (folP) from Streptococcus pyogenes serotype M3 (strain ATCC BAA-595 / MGAS315).